We begin with the raw amino-acid sequence, 274 residues long: Protein YehF (274 aa).

A WGR domain is found at 2 to 78; sequence RHFIYQDEKS…KDNSLQPSQT (77 aa).

In terms of biological role, has been implicated in selenate reduction; a mini-Tn10 insertion mutant in 'molR', (which was mapped to 47.3 centisomes i.e. this locus), is defective in the reduction of selenate. This is Protein YehF (yehF) from Escherichia coli (strain K12).